A 347-amino-acid polypeptide reads, in one-letter code: Beta carbonic anhydrase 1, chloroplastic (347 aa).

The N-terminal 113 residues, 1-113 (MSTAPLSGFF…AAAKVEQITA (113 aa)), are a transit peptide targeting the chloroplast. A114 carries the N-acetylalanine modification. Position 175 is a phosphoserine (S175). Y203 is subject to Phosphotyrosine. At S266 the chain carries Phosphoserine. The residue at position 280 (C280) is an S-nitrosocysteine.

This sequence belongs to the beta-class carbonic anhydrase family. Homohexamer. S-nitrosylation at Cys-280 is up-regulated during nitrosative burst and suppresses both binding of salicylic acid and carbonic anhydrase activity. S-nitrosylated in response to an avirulent but not to a virulent bacterial strain. Strongly expressed in aerial tissues including leaves, stems, flowers and siliques. Accumulates in both guard cells and mesophyll cells.

Its subcellular location is the plastid. The protein resides in the chloroplast stroma. It localises to the cell membrane. It catalyses the reaction hydrogencarbonate + H(+) = CO2 + H2O. Functionally, reversible hydration of carbon dioxide. Required for photosynthesis in cotyledons. Binds salicylic acid. Together with BCA4, involved in the CO(2) signaling pathway which controls gas-exchange between plants and the atmosphere by modulating stomatal development and movements. Promotes water use efficiency. The sequence is that of Beta carbonic anhydrase 1, chloroplastic from Arabidopsis thaliana (Mouse-ear cress).